A 358-amino-acid chain; its full sequence is Methylthioribose-1-phosphate isomerase (358 aa).

Substrate is bound by residues 54-56 (RGA), Arg-96, and Gln-205. The active-site Proton donor is Asp-246. 256–257 (NK) is a substrate binding site.

This sequence belongs to the eIF-2B alpha/beta/delta subunits family. MtnA subfamily.

It carries out the reaction 5-(methylsulfanyl)-alpha-D-ribose 1-phosphate = 5-(methylsulfanyl)-D-ribulose 1-phosphate. The protein operates within amino-acid biosynthesis; L-methionine biosynthesis via salvage pathway; L-methionine from S-methyl-5-thio-alpha-D-ribose 1-phosphate: step 1/6. Functionally, catalyzes the interconversion of methylthioribose-1-phosphate (MTR-1-P) into methylthioribulose-1-phosphate (MTRu-1-P). This chain is Methylthioribose-1-phosphate isomerase, found in Pseudomonas syringae pv. syringae (strain B728a).